We begin with the raw amino-acid sequence, 185 residues long: Ribosome-recycling factor (185 aa).

The protein belongs to the RRF family.

The protein resides in the cytoplasm. Responsible for the release of ribosomes from messenger RNA at the termination of protein biosynthesis. May increase the efficiency of translation by recycling ribosomes from one round of translation to another. This chain is Ribosome-recycling factor, found in Dehalococcoides mccartyi (strain CBDB1).